Reading from the N-terminus, the 886-residue chain is DNA mismatch repair protein MutS (886 aa).

An ATP-binding site is contributed by 641-648; sequence GPNMAGKS.

This sequence belongs to the DNA mismatch repair MutS family.

In terms of biological role, this protein is involved in the repair of mismatches in DNA. It is possible that it carries out the mismatch recognition step. This protein has a weak ATPase activity. This Rickettsia rickettsii (strain Sheila Smith) protein is DNA mismatch repair protein MutS.